We begin with the raw amino-acid sequence, 251 residues long: NLP effector protein Pc129485 (251 aa).

The first 19 residues, 1–19 (MNFRIVLLVLVASLAGAQA), serve as a signal peptide directing secretion. Residues 127-133 (GHRHNWE) carry the Hepta-peptide GHRHDWE motif motif. Asn146 and Asn218 each carry an N-linked (GlcNAc...) asparagine glycan.

Belongs to the Necrosis inducing protein (NPP1) family.

Its subcellular location is the secreted. In terms of biological role, secreted effector that contributes strongly to virulence during infection by P.capsici. This Phytophthora capsici protein is NLP effector protein Pc129485.